The chain runs to 302 residues: Taste receptor type 2 member 104 (302 aa).

Residues 1 to 7 (MLSMLES) lie on the Extracellular side of the membrane. Residues 8-28 (ILLSVATSEAMLGILGNIFIV) traverse the membrane as a helical segment. The Cytoplasmic segment spans residues 29–43 (LVNCTNWVRNKKLSK). The chain crosses the membrane as a helical span at residues 44–64 (INFILTGLAISRVFTIWIITL). Over 65–87 (DAYTKVFFLTTLMPSNLHECISY) the chain is Extracellular. Residues 88 to 108 (IWVIINHLSVWFATSLSIFYF) traverse the membrane as a helical segment. Over 109 to 128 (LKIANFSHYIFLWLKRRADK) the chain is Cytoplasmic. The chain crosses the membrane as a helical span at residues 129-149 (VFVFLIGYLIITWLASFPLAV). At 150–182 (TVIKNIKVHHNNTSWLIQLEKRELLINYVFANM) the chain is on the extracellular side. N-linked (GlcNAc...) asparagine glycosylation is found at N160 and N161. Residues 183 to 203 (GPISLFMVAVFTCFLLTISLW) form a helical membrane-spanning segment. Over 204 to 233 (RHRRRMQSTGSKFRDLNTEVHVKAMKVLIS) the chain is Cytoplasmic. A helical membrane pass occupies residues 234 to 254 (FIILFILYFMGVLIETLCLFL). The Extracellular portion of the chain corresponds to 255–257 (TEN). A helical membrane pass occupies residues 258-278 (ILLFIFGFTLSSTYPCCHSFI). At 279–302 (LILTSRELKQASMRALQRLKCCET) the chain is on the cytoplasmic side.

This sequence belongs to the G-protein coupled receptor T2R family.

It localises to the membrane. Putative taste receptor which may play a role in the perception of bitterness. The chain is Taste receptor type 2 member 104 from Rattus norvegicus (Rat).